We begin with the raw amino-acid sequence, 277 residues long: Soluble NSF attachment protein 29 (277 aa).

A compositionally biased stretch (basic and acidic residues) spans 1–11 (MSRNPFDDDYR). Disordered stretches follow at residues 1 to 30 (MSRNPFDDDYRPSAASSTMPVKSYTTMGHY), 49 to 73 (ESLDSTERSRRHLENSEKIGTSTAQ), and 117 to 170 (KFTK…ESSR). Positions 14–28 (AASSTMPVKSYTTMG) are enriched in polar residues. The 63-residue stretch at 44-106 (EKTLQESLDS…QMTQRNLNSL (63 aa)) folds into the t-SNARE coiled-coil homology 1 domain. Positions 49–65 (ESLDSTERSRRHLENSE) are enriched in basic and acidic residues. The span at 134–170 (SKSASRLSETATNLSSGGGSATFSGPSGQRTLTESSR) shows a compositional bias: polar residues. Residues 179-241 (EAMDNQIDEN…RDQDKQMQKI (63 aa)) enclose the t-SNARE coiled-coil homology 2 domain.

The protein belongs to the SNAP-25 family.

Its subcellular location is the synapse. The protein localises to the synaptosome. In terms of biological role, SNAREs, soluble N-ethylmaleimide-sensitive factor-attachment protein receptors, are essential proteins for fusion of cellular membranes. SNAREs localized on opposing membranes assemble to form a trans-SNARE complex, an extended, parallel four alpha-helical bundle that drives membrane fusion. Plays a role in the processing and secretion of the aspartic protease hrg-7 from the intestine. The chain is Soluble NSF attachment protein 29 from Caenorhabditis elegans.